The following is a 211-amino-acid chain: Imidazole glycerol phosphate synthase subunit HisH (211 aa).

A Glutamine amidotransferase type-1 domain is found at 1–206 (MIGIIDYGRG…GKWVNEDATV (206 aa)). The Nucleophile role is filled by Cys-79. Active-site residues include His-181 and Glu-183.

As to quaternary structure, heterodimer of HisH and HisF.

It localises to the cytoplasm. It catalyses the reaction 5-[(5-phospho-1-deoxy-D-ribulos-1-ylimino)methylamino]-1-(5-phospho-beta-D-ribosyl)imidazole-4-carboxamide + L-glutamine = D-erythro-1-(imidazol-4-yl)glycerol 3-phosphate + 5-amino-1-(5-phospho-beta-D-ribosyl)imidazole-4-carboxamide + L-glutamate + H(+). It carries out the reaction L-glutamine + H2O = L-glutamate + NH4(+). The protein operates within amino-acid biosynthesis; L-histidine biosynthesis; L-histidine from 5-phospho-alpha-D-ribose 1-diphosphate: step 5/9. Functionally, IGPS catalyzes the conversion of PRFAR and glutamine to IGP, AICAR and glutamate. The HisH subunit catalyzes the hydrolysis of glutamine to glutamate and ammonia as part of the synthesis of IGP and AICAR. The resulting ammonia molecule is channeled to the active site of HisF. This Desulfitobacterium hafniense (strain DSM 10664 / DCB-2) protein is Imidazole glycerol phosphate synthase subunit HisH.